The sequence spans 406 residues: Peptidase T (406 aa).

Histidine 82 provides a ligand contact to Zn(2+). Aspartate 84 is a catalytic residue. Aspartate 142 contacts Zn(2+). Glutamate 176 functions as the Proton acceptor in the catalytic mechanism. Residues glutamate 177, aspartate 199, and histidine 381 each coordinate Zn(2+).

The protein belongs to the peptidase M20B family. Zn(2+) serves as cofactor.

It is found in the cytoplasm. The enzyme catalyses Release of the N-terminal residue from a tripeptide.. In terms of biological role, cleaves the N-terminal amino acid of tripeptides. This chain is Peptidase T, found in Streptococcus agalactiae serotype Ia (strain ATCC 27591 / A909 / CDC SS700).